We begin with the raw amino-acid sequence, 325 residues long: Ribosomal RNA small subunit methyltransferase H (325 aa).

Residues 33–35 (GGH), D52, L87, D101, and Q108 contribute to the S-adenosyl-L-methionine site. A disordered region spans residues 285 to 325 (AEPAGEVEKADNPRAASVRLRAAERTAPNPDRTQPTIGGAS). The span at 315–325 (DRTQPTIGGAS) shows a compositional bias: polar residues.

This sequence belongs to the methyltransferase superfamily. RsmH family.

The protein localises to the cytoplasm. It carries out the reaction cytidine(1402) in 16S rRNA + S-adenosyl-L-methionine = N(4)-methylcytidine(1402) in 16S rRNA + S-adenosyl-L-homocysteine + H(+). Specifically methylates the N4 position of cytidine in position 1402 (C1402) of 16S rRNA. This Frankia alni (strain DSM 45986 / CECT 9034 / ACN14a) protein is Ribosomal RNA small subunit methyltransferase H.